Consider the following 359-residue polypeptide: Beta-1,3-galactosyltransferase bre-2 (359 aa).

Topologically, residues Met1–Val11 are cytoplasmic. Residues Asn12–Tyr29 traverse the membrane as a helical; Signal-anchor for type II membrane protein segment. The Lumenal segment spans residues Lys30 to Lys359. 3 N-linked (GlcNAc...) asparagine glycosylation sites follow: Asn73, Asn163, and Asn209.

It belongs to the glycosyltransferase 31 family.

Its subcellular location is the golgi apparatus membrane. Its pathway is protein modification; protein glycosylation. Transfers N-acetylgalactosamine onto carbohydrate substrates. Involved in susceptibility to pore-forming crystal toxins in conjunction with bre-1, bre-3, bre-4, and bre-5. Involved in resistance to the nematotoxic C.cinerea galectin Cgl2. The protein is Beta-1,3-galactosyltransferase bre-2 of Caenorhabditis elegans.